A 432-amino-acid chain; its full sequence is Adenosylmethionine-8-amino-7-oxononanoate aminotransferase (432 aa).

Residue Trp52 coordinates substrate. Residue 112–113 participates in pyridoxal 5'-phosphate binding; it reads GS. A substrate-binding site is contributed by Tyr144. A pyridoxal 5'-phosphate-binding site is contributed by Asp245. 2 residues coordinate substrate: Lys274 and Gly307. Lys274 carries the post-translational modification N6-(pyridoxal phosphate)lysine. 308–309 is a binding site for pyridoxal 5'-phosphate; that stretch reads PT. Substrate is bound at residue Arg391.

This sequence belongs to the class-III pyridoxal-phosphate-dependent aminotransferase family. BioA subfamily. Homodimer. It depends on pyridoxal 5'-phosphate as a cofactor.

It localises to the cytoplasm. The catalysed reaction is (8S)-8-amino-7-oxononanoate + S-adenosyl-L-methionine = S-adenosyl-4-methylsulfanyl-2-oxobutanoate + (7R,8S)-7,8-diammoniononanoate. It participates in cofactor biosynthesis; biotin biosynthesis; 7,8-diaminononanoate from 8-amino-7-oxononanoate (SAM route): step 1/1. Its function is as follows. Catalyzes the transfer of the alpha-amino group from S-adenosyl-L-methionine (SAM) to 7-keto-8-aminopelargonic acid (KAPA) to form 7,8-diaminopelargonic acid (DAPA). It is the only aminotransferase known to utilize SAM as an amino donor. The polypeptide is Adenosylmethionine-8-amino-7-oxononanoate aminotransferase (Buchnera aphidicola subsp. Schizaphis graminum (strain Sg)).